The following is a 391-amino-acid chain: uncharacterized protein (391 aa).

The next 11 membrane-spanning stretches (helical) occupy residues 15–35, 48–68, 81–101, 139–159, 167–187, 217–237, 251–271, 275–295, 303–323, 346–366, and 369–389; these read LSFC…LPIL, FLIG…QIPF, IIFG…TNSI, IIGV…PIIA, IFWI…FLIP, FYLG…IIPY, IVYF…VFYF, FFLK…LLLF, ICLT…EIFF, TSQF…CTFF, and NHIF…SFFC.

This sequence belongs to the major facilitator superfamily.

It localises to the cell membrane. This is an uncharacterized protein from Buchnera aphidicola subsp. Schizaphis graminum (strain Sg).